The following is a 128-amino-acid chain: Putative transmembrane protein 244 (128 aa).

A run of 3 helical transmembrane segments spans residues 17–37 (FLLCVILFYTVYYVSLSMGCV), 65–85 (VLLVSTEVTYFVCGLFFVPVV), and 93–113 (AISVTILHVAITSTVMLEFPL).

It is found in the membrane. The polypeptide is Putative transmembrane protein 244 (TMEM244) (Homo sapiens (Human)).